The following is a 136-amino-acid chain: Large ribosomal subunit protein bL17 (136 aa).

It belongs to the bacterial ribosomal protein bL17 family. In terms of assembly, part of the 50S ribosomal subunit. Contacts protein L32.

This chain is Large ribosomal subunit protein bL17, found in Rickettsia conorii (strain ATCC VR-613 / Malish 7).